Reading from the N-terminus, the 274-residue chain is Homeobox-leucine zipper protein HAT9 (274 aa).

Over residues 64-74 (SSHSGVSSFSS) the composition is skewed to low complexity. Positions 64–96 (SSHSGVSSFSSGRVVKRERDGGEESPEEEEMTE) are disordered. Residues 110–169 (SARKKLRLTKQQSALLEESFKDHSTLNPKQKQVLARQLNLRPRQVEVWFQNRRARTKLKQ) constitute a DNA-binding region (homeobox). A leucine-zipper region spans residues 177–198 (LKKCCETLADENIRLQKEIQEL).

This sequence belongs to the HD-ZIP homeobox family. Class II subfamily.

Its subcellular location is the nucleus. Functionally, probable transcription factor. The protein is Homeobox-leucine zipper protein HAT9 (HAT9) of Arabidopsis thaliana (Mouse-ear cress).